Consider the following 522-residue polypeptide: Maturase K (522 aa).

This sequence belongs to the intron maturase 2 family. MatK subfamily.

Its subcellular location is the plastid. It localises to the chloroplast. In terms of biological role, usually encoded in the trnK tRNA gene intron. Probably assists in splicing its own and other chloroplast group II introns. In Micranthus junceus (Micranthus plantagineus var. junceus), this protein is Maturase K.